Consider the following 162-residue polypeptide: Cytochrome B pre-mRNA-processing protein 6 (162 aa).

Serine 2 carries the post-translational modification N-acetylserine. Threonine 97 carries the post-translational modification Phosphothreonine.

It localises to the mitochondrion. This protein is involved in processing of the 5' terminus and the intervening sequences of cytochrome b pre-mRNA. This chain is Cytochrome B pre-mRNA-processing protein 6 (CBP6), found in Saccharomyces cerevisiae (strain ATCC 204508 / S288c) (Baker's yeast).